Reading from the N-terminus, the 210-residue chain is Chaperone protein TorD (210 aa).

Belongs to the TorD/DmsD family. TorD subfamily.

The protein localises to the cytoplasm. Involved in the biogenesis of TorA. Acts on TorA before the insertion of the molybdenum cofactor and, as a result, probably favors a conformation of the apoenzyme that is competent for acquiring the cofactor. The sequence is that of Chaperone protein TorD from Salmonella agona (strain SL483).